A 474-amino-acid chain; its full sequence is GTPase Der (474 aa).

2 EngA-type G domains span residues 3–167 (FTVA…GVDR) and 204–379 (LRVA…MVWN). Residues 9 to 16 (GRPNVGKS), 56 to 60 (DTAGL), 119 to 122 (NKSE), 210 to 217 (GRPNAGKS), 257 to 261 (DTAGM), and 322 to 325 (NKWD) each bind GTP. The region spanning 380–464 (KRISTAKLNR…PIRIHLKASE (85 aa)) is the KH-like domain.

It belongs to the TRAFAC class TrmE-Era-EngA-EngB-Septin-like GTPase superfamily. EngA (Der) GTPase family. Associates with the 50S ribosomal subunit.

Its function is as follows. GTPase that plays an essential role in the late steps of ribosome biogenesis. This chain is GTPase Der, found in Allorhizobium ampelinum (strain ATCC BAA-846 / DSM 112012 / S4) (Agrobacterium vitis (strain S4)).